Consider the following 181-residue polypeptide: Oligoribonuclease (181 aa).

Residues 8–171 (LIWLDLEMTG…DDIKDSIMEL (164 aa)) enclose the Exonuclease domain. The active site involves tyrosine 129.

This sequence belongs to the oligoribonuclease family.

The protein localises to the cytoplasm. Functionally, 3'-to-5' exoribonuclease specific for small oligoribonucleotides. The protein is Oligoribonuclease of Pseudoalteromonas translucida (strain TAC 125).